Consider the following 827-residue polypeptide: Glycerol-3-phosphate acyltransferase (827 aa).

Positions 325 to 330 match the HXXXXD motif motif; the sequence is CHRSHM.

Belongs to the GPAT/DAPAT family.

Its subcellular location is the cell inner membrane. It carries out the reaction sn-glycerol 3-phosphate + an acyl-CoA = a 1-acyl-sn-glycero-3-phosphate + CoA. The protein operates within phospholipid metabolism; CDP-diacylglycerol biosynthesis; CDP-diacylglycerol from sn-glycerol 3-phosphate: step 1/3. The polypeptide is Glycerol-3-phosphate acyltransferase (Shigella flexneri serotype 5b (strain 8401)).